The following is a 317-amino-acid chain: Ribosomal protein L11 methyltransferase (317 aa).

4 residues coordinate S-adenosyl-L-methionine: Thr158, Gly179, Asp201, and Asn244.

The protein belongs to the methyltransferase superfamily. PrmA family.

Its subcellular location is the cytoplasm. The catalysed reaction is L-lysyl-[protein] + 3 S-adenosyl-L-methionine = N(6),N(6),N(6)-trimethyl-L-lysyl-[protein] + 3 S-adenosyl-L-homocysteine + 3 H(+). Methylates ribosomal protein L11. This Streptococcus agalactiae serotype Ia (strain ATCC 27591 / A909 / CDC SS700) protein is Ribosomal protein L11 methyltransferase.